The primary structure comprises 40 residues: Photosystem II reaction center protein J (40 aa).

A helical transmembrane segment spans residues I8–F28.

It belongs to the PsbJ family. In terms of assembly, PSII is composed of 1 copy each of membrane proteins PsbA, PsbB, PsbC, PsbD, PsbE, PsbF, PsbH, PsbI, PsbJ, PsbK, PsbL, PsbM, PsbT, PsbX, PsbY, PsbZ, Psb30/Ycf12, at least 3 peripheral proteins of the oxygen-evolving complex and a large number of cofactors. It forms dimeric complexes.

It is found in the plastid. Its subcellular location is the chloroplast thylakoid membrane. One of the components of the core complex of photosystem II (PSII). PSII is a light-driven water:plastoquinone oxidoreductase that uses light energy to abstract electrons from H(2)O, generating O(2) and a proton gradient subsequently used for ATP formation. It consists of a core antenna complex that captures photons, and an electron transfer chain that converts photonic excitation into a charge separation. The polypeptide is Photosystem II reaction center protein J (Anthoceros angustus (Hornwort)).